A 904-amino-acid chain; its full sequence is Myelin regulatory factor-like protein (904 aa).

Residues 46–132 (LQRQLPDTPP…ATCRHQTGPS (87 aa)) form a disordered region. Residues 100 to 117 (PSQSMAGQTHSSFQNGYP) show a composition bias toward polar residues. Positions 108-400 (THSSFQNGYP…SNPGQFENDS (293 aa)) form a DNA-binding region, NDT80. The Peptidase S74 domain occupies 446 to 554 (SDSRVKENIQ…KLTNNLEERI (109 aa)). Residues 538-575 (GAVKQLCKLTNNLEERIEELEIWNKKLARLKRLSSSWK) adopt a coiled-coil conformation. A helical transmembrane segment spans residues 624-644 (LVVVLIAVMAFCALTIVALYI). The tract at residues 656-688 (NLPLSNMTSSPEPALSSTAPTSAPHTTPETTQT) is disordered. Residues 663 to 688 (TSSPEPALSSTAPTSAPHTTPETTQT) show a composition bias toward low complexity.

Belongs to the MRF family.

The protein localises to the membrane. The polypeptide is Myelin regulatory factor-like protein (Myrfl) (Mus musculus (Mouse)).